The primary structure comprises 125 residues: MSKLKVKLLRGLAGESERHIQAVKSLGLKKRGQERILEDNPLVWGNIRKAFHLVGVAYRIDFSGDIPTVERDLSEKPDYTVINKNGVYTNGKGVYYFSRITDLEDFLRKKGYKKYKNWKGEEVEL.

The tract at residues 1 to 61 is large ribosomal subunit protein uL30; sequence MSKLKVKLLR…HLVGVAYRID (61 aa). The tract at residues 62–125 is unknown; the sequence is FSGDIPTVER…KNWKGEEVEL (64 aa).

This sequence belongs to the universal ribosomal protein uL30 family. In terms of assembly, part of the 50S ribosomal subunit.

This is Large ribosomal subunit protein uL30 from Aquifex aeolicus (strain VF5).